We begin with the raw amino-acid sequence, 192 residues long: Nucleoside triphosphate pyrophosphatase (192 aa).

Aspartate 73 functions as the Proton acceptor in the catalytic mechanism.

This sequence belongs to the Maf family. It depends on a divalent metal cation as a cofactor.

The protein resides in the cytoplasm. The catalysed reaction is a ribonucleoside 5'-triphosphate + H2O = a ribonucleoside 5'-phosphate + diphosphate + H(+). It catalyses the reaction a 2'-deoxyribonucleoside 5'-triphosphate + H2O = a 2'-deoxyribonucleoside 5'-phosphate + diphosphate + H(+). Functionally, nucleoside triphosphate pyrophosphatase. May have a dual role in cell division arrest and in preventing the incorporation of modified nucleotides into cellular nucleic acids. The chain is Nucleoside triphosphate pyrophosphatase from Ehrlichia chaffeensis (strain ATCC CRL-10679 / Arkansas).